Consider the following 358-residue polypeptide: UPF0324 membrane protein CT0845 (358 aa).

10 helical membrane-spanning segments follow: residues 36-53 (YFPG…ATFL), 57-76 (YGAP…RFLS), 83-105 (LVGI…GMRI), 115-134 (VKPV…FGLA), 146-168 (GVLT…AAVL), 178-200 (TIFT…PVVA), 244-261 (LLRV…SLIF), 276-295 (LLPP…SLGV), 307-325 (VSRW…KTSL), and 335-357 (PVSI…VVWM).

It belongs to the UPF0324 family.

The protein localises to the cell membrane. The chain is UPF0324 membrane protein CT0845 from Chlorobaculum tepidum (strain ATCC 49652 / DSM 12025 / NBRC 103806 / TLS) (Chlorobium tepidum).